The primary structure comprises 285 residues: NAD kinase (285 aa).

The active-site Proton acceptor is the aspartate 66. NAD(+) contacts are provided by residues 66 to 67 (DG), 137 to 138 (ND), arginine 148, arginine 165, aspartate 167, and 178 to 183 (TAYSLS).

Belongs to the NAD kinase family. It depends on a divalent metal cation as a cofactor.

The protein resides in the cytoplasm. The enzyme catalyses NAD(+) + ATP = ADP + NADP(+) + H(+). Functionally, involved in the regulation of the intracellular balance of NAD and NADP, and is a key enzyme in the biosynthesis of NADP. Catalyzes specifically the phosphorylation on 2'-hydroxyl of the adenosine moiety of NAD to yield NADP. The chain is NAD kinase from Chlorobium phaeobacteroides (strain BS1).